We begin with the raw amino-acid sequence, 122 residues long: UPF0382 membrane protein SAB0533 (122 aa).

The next 4 membrane-spanning stretches (helical) occupy residues 3 to 23 (LFIILGALNAMMAVGTGAFGA), 46 to 66 (MYHGLALLIIGVISGTTSINV), 69 to 89 (AGWLIFAGIIFFSGSLYILVL), and 98 to 118 (ITPIGGVLFIIGWIMLIIATF).

It belongs to the UPF0382 family.

It is found in the cell membrane. The protein is UPF0382 membrane protein SAB0533 of Staphylococcus aureus (strain bovine RF122 / ET3-1).